Consider the following 459-residue polypeptide: Ribulose bisphosphate carboxylase (459 aa).

Asn-111 serves as a coordination point for substrate. The active-site Proton acceptor is the Lys-166. Lys-168 serves as a coordination point for substrate. Mg(2+)-binding residues include Lys-191, Asp-193, and Glu-194. Lys-191 is subject to N6-carboxylysine. The active-site Proton acceptor is the His-287. Substrate is bound by residues Arg-288, His-321, and Ser-368.

The protein belongs to the RuBisCO large chain family. Type II subfamily. Homodimer. It depends on Mg(2+) as a cofactor.

The catalysed reaction is 2 (2R)-3-phosphoglycerate + 2 H(+) = D-ribulose 1,5-bisphosphate + CO2 + H2O. It catalyses the reaction D-ribulose 1,5-bisphosphate + O2 = 2-phosphoglycolate + (2R)-3-phosphoglycerate + 2 H(+). In terms of biological role, ruBisCO catalyzes two reactions: the carboxylation of D-ribulose 1,5-bisphosphate, the primary event in carbon dioxide fixation, as well as the oxidative fragmentation of the pentose substrate. Both reactions occur simultaneously and in competition at the same active site. This is Ribulose bisphosphate carboxylase from Cereibacter sphaeroides (Rhodobacter sphaeroides).